The chain runs to 129 residues: Protein Turandot A2 (129 aa).

The signal sequence occupies residues methionine 1–glycine 21. Residue asparagine 49 is glycosylated (N-linked (GlcNAc...) asparagine).

This sequence belongs to the Turandot family.

It is found in the secreted. Functionally, a humoral factor that plays a role in stress tolerance; gives increased resistance to the lethal effects of bacterial challenge and stress. Regulated by the JAK/STAT pathway and NF-KB-like Relish pathway in the fat body, upd3 in the hemocytes and Mekk1 in response to septic injury and consequent immune response. The chain is Protein Turandot A2 (TotA2) from Drosophila simulans (Fruit fly).